Here is a 96-residue protein sequence, read N- to C-terminus: ESAT-6-like protein EsxR (96 aa).

It belongs to the WXG100 family. ESAT-6 subfamily.

It is found in the secreted. The protein is ESAT-6-like protein EsxR of Mycobacterium leprae (strain TN).